Here is a 436-residue protein sequence, read N- to C-terminus: Origin recognition complex subunit 4 (436 aa).

At Lys7 the chain carries N6-methyllysine. Residue 67-74 participates in ATP binding; sequence GPRGSGKT.

It belongs to the ORC4 family. As to quaternary structure, component of ORC, a complex composed of at least 6 subunits: ORC1, ORC2, ORC3, ORC4, ORC5 and ORC6. ORC is regulated in a cell-cycle dependent manner. It is sequentially assembled at the exit from anaphase of mitosis and disassembled as cells enter S phase. Interacts with DBF4. Interacts with POLQ.

Its subcellular location is the nucleus. Functionally, component of the origin recognition complex (ORC) that binds origins of replication. DNA-binding is ATP-dependent. The specific DNA sequences that define origins of replication have not been identified yet. ORC is required to assemble the pre-replication complex necessary to initiate DNA replication. Binds histone H3 and H4 trimethylation marks H3K9me3, H3K27me3 and H4K20me3. This chain is Origin recognition complex subunit 4 (ORC4), found in Homo sapiens (Human).